The sequence spans 864 residues: MTARRLINIVPNTSKLDPLKEEDSTHLKQNQPKKFSTKELMLSEYTERKSCSLPLSKSRSGSSASSSTTGSNGKNIGTRRPSSNLDFNFASQDVVKNVLGNNNPHVPTAKCIRPISDDSIGTSSTEIFSSSHSNTTSDSLCTSDISSEEGEIANSKMEDNCFFKSMREADHRSNITPLKKSRPGSILQKTRTASSADKTICSMSTITTCIPSRQNSVSTPKLSRTVGLPGSSNTTNSIAASQTSFISENDSPLKHHCMSTATIQEPKLMPITKTPYVHSNSTSVILPYKTTQLTPSQRYRLRKEQNDQSLRKAIKMKEKFYEDQDVNLELQEGDVDGSLIWNIPMASLSTSSFLTLSKFNRKEMSLDSARGDEEILIQENNCEGKQHSSSALCVDKTFHQVHSTRKHTSNSSNTLKESCLDYKELPPTCIPGISPVSDSQYIQDTMKNLSQIYLHSSEKISKSILSGRSRSVQSLPLEFKEASSQGMEDLMLVSEDKLKAVSHFRPSWLPPKDFKERKLQDKQIYKNIDLASMEELQKNKERDEKAKKNEQNKVKFQHLLDRGITRNSSLSELKKIIWETPLISKVRLQIYSQLLQSDNCLITKCFIESFEEVMQLLNKMDFPKDKEFEIRQLIEHDVQEKVFYKNGTDKQVVSDLMLLLQLKSISQQGLVTGDEMLFYHFLTDQSFGTLKETWEMVNLIQMTCFSEICKEKYDSRILNPRGIVAHLLRKDEFKNEFNGGCLNSNTWWNILQRMDHKLFMWVMDVIIVHNGQNFANYPVKMEIFKDKVWEYYRSKKVIVNYKILVSLTVNVLLNYHFGYDNLKHLSDLDDKHFCIPLYTEDSIEEENLNNIFTKWWLHYYRKLR.

Disordered stretches follow at residues 16–84 (LDPL…PSSN), 123–142 (SSTE…SLCT), and 213–235 (RQNS…SNTT). Over residues 17-26 (DPLKEEDSTH) the composition is skewed to basic and acidic residues. The segment covering 51-71 (CSLPLSKSRSGSSASSSTTGS) has biased composition (low complexity). The segment covering 72 to 84 (NGKNIGTRRPSSN) has biased composition (polar residues). A phosphoserine mark is found at serine 82 and serine 83. Residues 123-139 (SSTEIFSSSHSNTTSDS) show a composition bias toward low complexity. Polar residues predominate over residues 213-222 (RQNSVSTPKL). Phosphoserine occurs at positions 450 and 532.

Belongs to the SBE2 family.

It is found in the golgi apparatus. Functionally, with SBE22, is involved in cell wall integrity and polarity processes like bud growth, through the transport of CHS3 and UTR2 to sites of growth. The sequence is that of Protein SBE2 (SBE2) from Saccharomyces cerevisiae (strain YJM789) (Baker's yeast).